The following is a 159-amino-acid chain: Phosphopantetheine adenylyltransferase (159 aa).

Thr9 serves as a coordination point for substrate. ATP contacts are provided by residues 9–10 and His17; that span reads TF. Substrate-binding residues include Lys41, Leu73, and Arg87. Residues 88–90, Glu98, and 123–129 contribute to the ATP site; these read GLR and YSYISST.

Belongs to the bacterial CoaD family. As to quaternary structure, homohexamer. It depends on Mg(2+) as a cofactor.

The protein resides in the cytoplasm. It catalyses the reaction (R)-4'-phosphopantetheine + ATP + H(+) = 3'-dephospho-CoA + diphosphate. The protein operates within cofactor biosynthesis; coenzyme A biosynthesis; CoA from (R)-pantothenate: step 4/5. Its function is as follows. Reversibly transfers an adenylyl group from ATP to 4'-phosphopantetheine, yielding dephospho-CoA (dPCoA) and pyrophosphate. This is Phosphopantetheine adenylyltransferase from Azotobacter vinelandii (strain DJ / ATCC BAA-1303).